We begin with the raw amino-acid sequence, 98 residues long: Large ribosomal subunit protein bL25 (98 aa).

Belongs to the bacterial ribosomal protein bL25 family. In terms of assembly, part of the 50S ribosomal subunit; part of the 5S rRNA/L5/L18/L25 subcomplex. Contacts the 5S rRNA. Binds to the 5S rRNA independently of L5 and L18.

Its function is as follows. This is one of the proteins that binds to the 5S RNA in the ribosome where it forms part of the central protuberance. This is Large ribosomal subunit protein bL25 from Synechocystis sp. (strain ATCC 27184 / PCC 6803 / Kazusa).